We begin with the raw amino-acid sequence, 180 residues long: MKIKKTAGRQLAPNRINEEITGVPEVRLTGIDGEAIGVVSIRDAQNLADEAGVDLVEISPNAEPPVCRIMDYGKFLFDKAKSAKEQKKKQKQVQVKEIKFRPGTDENDYQVKLRNLIRFLEDGDKAKITLRFRGREMAHQNLGMDLLNRIKTDLDEYAVVESFPKMEGRQAIMVLAPKKK.

Belongs to the IF-3 family. Monomer.

Its subcellular location is the cytoplasm. In terms of biological role, IF-3 binds to the 30S ribosomal subunit and shifts the equilibrium between 70S ribosomes and their 50S and 30S subunits in favor of the free subunits, thus enhancing the availability of 30S subunits on which protein synthesis initiation begins. This Shewanella oneidensis (strain ATCC 700550 / JCM 31522 / CIP 106686 / LMG 19005 / NCIMB 14063 / MR-1) protein is Translation initiation factor IF-3.